The following is a 279-amino-acid chain: Sarcosine/dimethylglycine N-methyltransferase (279 aa).

The protein belongs to the methyltransferase superfamily. As to quaternary structure, monomer.

The catalysed reaction is sarcosine + 2 S-adenosyl-L-methionine = glycine betaine + 2 S-adenosyl-L-homocysteine + 2 H(+). It catalyses the reaction sarcosine + S-adenosyl-L-methionine = N,N-dimethylglycine + S-adenosyl-L-homocysteine + H(+). The enzyme catalyses N,N-dimethylglycine + S-adenosyl-L-methionine = glycine betaine + S-adenosyl-L-homocysteine + H(+). Its pathway is amine and polyamine biosynthesis; betaine biosynthesis via glycine pathway; betaine from glycine: step 2/3. The protein operates within amine and polyamine biosynthesis; betaine biosynthesis via glycine pathway; betaine from glycine: step 3/3. P-chloromercuribenzoate acid inhibits 23% of the SDMT activities on sarcosine and dimethylglycine, and S-adenosylhomocysteine (AdoHcy) inhibits completely GSMT activities. Functionally, catalyzes the methylation of sarcosine and dimethylglycine to dimethylglycine and betaine, respectively, with S-adenosylmethionine (AdoMet) acting as the methyl donor. It has strict specificity for sarcosine and dimethylglycine as the methyl group acceptors. In Halorhodospira halochloris (Ectothiorhodospira halochloris), this protein is Sarcosine/dimethylglycine N-methyltransferase.